We begin with the raw amino-acid sequence, 616 residues long: Zinc metalloproteinase-disintegrin-like VLAIP-A (616 aa).

Residues 1-20 (MMQVLLVTISLAVFPYQGSS) form the signal peptide. Residues 21-194 (IILESGNVND…KASQLNLTPE (174 aa)) constitute a propeptide that is removed on maturation. A Pyrrolidone carboxylic acid modification is found at Gln-195. The Peptidase M12B domain occupies 203–399 (KYIKLVIVAD…KMPQCILNKP (197 aa)). 3 cysteine pairs are disulfide-bonded: Cys-314–Cys-394, Cys-354–Cys-378, and Cys-356–Cys-361. His-339 provides a ligand contact to Zn(2+). The active site involves Glu-340. His-343 and His-349 together coordinate Zn(2+). An N-linked (GlcNAc...) asparagine glycan is attached at Asn-377. The region spanning 407–493 (PAVCGNYLVE…ECPTDQFQRN (87 aa)) is the Disintegrin domain. Residues Val-409, Asn-412, Leu-414, Glu-416, Glu-419, and Asp-422 each contribute to the Ca(2+) site. Intrachain disulfides connect Cys-410–Cys-439, Cys-421–Cys-434, Cys-423–Cys-429, Cys-433–Cys-456, Cys-447–Cys-453, Cys-452–Cys-478, Cys-465–Cys-485, Cys-472–Cys-504, Cys-497–Cys-509, Cys-516–Cys-566, Cys-531–Cys-577, Cys-544–Cys-554, Cys-561–Cys-603, and Cys-597–Cys-609. Positions 471 to 473 (ECD) match the D/ECD-tripeptide motif.

It belongs to the venom metalloproteinase (M12B) family. P-III subfamily. P-IIIc sub-subfamily. As to quaternary structure, heterodimer; disulfide-linked. Zn(2+) is required as a cofactor. In terms of processing, the N-terminus is blocked. As to expression, expressed by the venom gland.

It localises to the secreted. Inhibited by EDTA or 1,10-phenanthroline. Not inhibited by PMSF. Its function is as follows. Snake venom zinc metalloprotease that hydrolyzes the alpha-chain (FGA) and more slowly the beta-chain (FGB) of fibrinogen, without affecting the gamma-chain. Cleaves alpha-chain of fibrinogen at '432-Lys-|-Leu-433' and '535-Pro-|-Met-536' bonds. Induces apoptosis in vascular endothelial cells and inhibits endothelial cell adhesion to extracellular matrix proteins such as fibrinogen, fibronectin, vitronectin, collagen I, and collagen IV. Also hydrolyzes azocasein, and insulin B-chain (at the '38-Ala-|-Leu-39' bond). The chain is Zinc metalloproteinase-disintegrin-like VLAIP-A from Macrovipera lebetinus (Levantine viper).